Here is a 63-residue protein sequence, read N- to C-terminus: Large ribosomal subunit protein uL30 (63 aa).

The protein belongs to the universal ribosomal protein uL30 family. In terms of assembly, part of the 50S ribosomal subunit.

In Xanthomonas axonopodis pv. citri (strain 306), this protein is Large ribosomal subunit protein uL30.